The following is a 280-amino-acid chain: Protein YIP4b (280 aa).

A compositionally biased stretch (polar residues) spans 1–15; the sequence is MSHNDTIPLYQSSQS. The interval 1 to 106 is disordered; sequence MSHNDTIPLY…SGFGSPPNTL (106 aa). At 1–146 the chain is on the cytoplasmic side; the sequence is MSHNDTIPLY…DPGKALRDWD (146 aa). A helical membrane pass occupies residues 147 to 167; sequence LWGPFFFIVFLGLTLSWSASV. Over 168–171 the chain is Lumenal; the sequence is KKSE. 2 consecutive transmembrane segments (helical) span residues 172 to 192 and 193 to 213; these read VFAVAFALLAAGAVILTLNVL and LLGGHIIFFQSLSLLGYCLFP. Residues 214 to 230 lie on the Lumenal side of the membrane; the sequence is LDVGAVICMLKDNVILK. Residues 231-251 form a helical membrane-spanning segment; that stretch reads MVVVSVTLAWSSWAAYPFMSA. The Cytoplasmic portion of the chain corresponds to 252 to 258; that stretch reads AVNPRRK. The helical transmembrane segment at 259 to 279 threads the bilayer; that stretch reads ALALYPVFLMYVSVGFLIIAI. Position 280 (asparagine 280) is a topological domain, lumenal.

The protein belongs to the YIP1 family. Homodimer and heterodimer with YIP4A. Component of a trans-Golgi network (TGN)-localized ECH/YIP4 complex made of ECH, YIP4A and YIP4B. Interacts directly with ECH. Expressed in developing root hair cells.

The protein resides in the golgi apparatus. Its subcellular location is the trans-Golgi network membrane. Together with YIP4A, involved in the regulation of cell elongation during root and hypocotyl growth. YIP4A and YIP4B are central trafficking components in Rho-of-plant (ROPs, e.g. ARAC4/ROP2, ARAC5/ROP4 and ARAC3/ROP6) small GTPases-dependent root hair formation, thus contributing to activation and plasma membrane accumulation of ROPs during hair initiation. The ECH/YIP4 complex is involved in the modulation of the trans-Golgi network (TGN)-mediated trafficking of some proteins and cell wall components (e.g. pectin and hemicellulose) to the cell wall in dark-grown hypocotyls and in secretory cells of the seed coat. The sequence is that of Protein YIP4b from Arabidopsis thaliana (Mouse-ear cress).